Consider the following 477-residue polypeptide: Stromelysin-1 (477 aa).

The signal sequence occupies residues 1 to 17 (MKSLPILLLLCVAVCSA). Residues 18–99 (YPLDGAARGE…PRCGVPDVGH (82 aa)) constitute a propeptide, activation peptide. The Cysteine switch signature appears at 90 to 97 (PRCGVPDV). Cys-92 lines the Zn(2+) pocket. Positions 124 and 158 each coordinate Ca(2+). The Zn(2+) site is built by His-168 and Asp-170. Ca(2+)-binding residues include Asp-175, Gly-176, Gly-178, and Val-180. His-183 lines the Zn(2+) pocket. Residues Gly-190, Asn-192, and Asp-194 each coordinate Ca(2+). His-196 is a Zn(2+) binding site. Asp-198, Asp-199, and Glu-201 together coordinate Ca(2+). Position 218 (His-218) interacts with Zn(2+). The active site involves Glu-219. Residues His-222 and His-228 each contribute to the Zn(2+) site. The tract at residues 262 to 287 (LYGPPPDSPETPLVPTEPVPPEPGTP) is disordered. The segment covering 276–285 (PTEPVPPEPG) has biased composition (pro residues). 4 Hemopexin repeats span residues 287 to 336 (PANC…WPSL), 337 to 383 (PSGV…GFPP), 385 to 433 (VRKI…FPGI), and 434 to 477 (DSKI…WLNC). The cysteines at positions 290 and 477 are disulfide-linked. Asp-297 is a Ca(2+) binding site. The Ca(2+) site is built by Asp-389 and Asp-438.

The protein belongs to the peptidase M10A family. Requires Ca(2+) as cofactor. It depends on Zn(2+) as a cofactor. Directly cleaved by HTRA2 to produce active form.

The protein resides in the secreted. Its subcellular location is the extracellular space. It localises to the extracellular matrix. It is found in the nucleus. The protein localises to the cytoplasm. The enzyme catalyses Preferential cleavage where P1', P2' and P3' are hydrophobic residues.. Enzymatic activity is activated by HTRA2 in dopaminergic cells upon mitochondrial stress. Functionally, metalloproteinase with a rather broad substrate specificity that can degrade fibronectin, laminin, gelatins of type I, III, IV, and V; collagens III, IV, X, and IX, and cartilage proteoglycans. Activates different molecules including growth factors, plasminogen or other matrix metalloproteinases such as MMP9. Once released into the extracellular matrix (ECM), the inactive pro-enzyme is activated by the plasmin cascade signaling pathway. Also acts intracellularly. For example, in dopaminergic neurons, gets activated by the serine protease HTRA2 upon stress and plays a pivotal role in DA neuronal degeneration by mediating microglial activation and alpha-synuclein/SNCA cleavage. In addition, plays a role in immune response and possesses antiviral activity against various viruses such as vesicular stomatitis virus, influenza A virus (H1N1) and human herpes virus 1. Mechanistically, translocates from the cytoplasm into the cell nucleus upon virus infection to influence NF-kappa-B activities. This is Stromelysin-1 (MMP3) from Homo sapiens (Human).